We begin with the raw amino-acid sequence, 396 residues long: Argininosuccinate synthase (396 aa).

Residues 10–18 (AYSGGLDTS) and A37 each bind ATP. L-citrulline contacts are provided by Y88 and S93. Residue G118 coordinates ATP. Residues T120, N124, and D125 each coordinate L-aspartate. Residue N124 participates in L-citrulline binding. Positions 128, 176, 185, 261, and 273 each coordinate L-citrulline.

This sequence belongs to the argininosuccinate synthase family. Type 1 subfamily. Homotetramer.

The protein localises to the cytoplasm. The catalysed reaction is L-citrulline + L-aspartate + ATP = 2-(N(omega)-L-arginino)succinate + AMP + diphosphate + H(+). It functions in the pathway amino-acid biosynthesis; L-arginine biosynthesis; L-arginine from L-ornithine and carbamoyl phosphate: step 2/3. In Nitratidesulfovibrio vulgaris (strain DP4) (Desulfovibrio vulgaris), this protein is Argininosuccinate synthase.